Reading from the N-terminus, the 75-residue chain is Ribonuclease pancreatic (75 aa).

Intrachain disulfides connect C7–C65 and C46–C53. An N-linked (GlcNAc...) asparagine glycan is attached at N15. Residues 22–26 (KPVNT), K47, and R66 contribute to the substrate site.

The protein belongs to the pancreatic ribonuclease family. Monomer. Interacts with and forms tight 1:1 complexes with RNH1. Dimerization of two such complexes may occur. Interaction with RNH1 inhibits this protein. Pancreas.

The protein resides in the secreted. The catalysed reaction is an [RNA] containing cytidine + H2O = an [RNA]-3'-cytidine-3'-phosphate + a 5'-hydroxy-ribonucleotide-3'-[RNA].. The enzyme catalyses an [RNA] containing uridine + H2O = an [RNA]-3'-uridine-3'-phosphate + a 5'-hydroxy-ribonucleotide-3'-[RNA].. Endonuclease that catalyzes the cleavage of RNA on the 3' side of pyrimidine nucleotides. Acts on single-stranded and double-stranded RNA. This is Ribonuclease pancreatic (rnase1) from Oryx leucoryx (Arabian oryx).